A 1697-amino-acid polypeptide reads, in one-letter code: Phosphatidylinositol 3-kinase 3 (1697 aa).

Disordered regions lie at residues Arg-57–Cys-91, Ile-169–Ile-229, Lys-244–Ile-279, Lys-310–Gly-376, Ser-398–Ser-428, and Asp-440–Glu-504. Composition is skewed to low complexity over residues Asn-60–Asn-87, Asn-170–Asn-196, and Asn-212–Asn-222. Low complexity-rich tracts occupy residues Asn-312–Ser-374 and Ser-398–Ser-408. 2 stretches are compositionally biased toward polar residues: residues Ile-409–Ser-428 and Ser-444–Phe-456. The segment covering Asn-457 to Asp-503 has biased composition (low complexity). Positions Pro-737–Glu-823 constitute a PI3K-RBD domain. Positions Val-888 to Lys-1036 constitute a C2 PI3K-type domain. The PIK helical domain occupies Gly-1060–Tyr-1238. The PI3K/PI4K catalytic domain occupies Ile-1304 to Thr-1581. Positions Ser-1310–Val-1316 are G-loop. Residues Gly-1447–Asn-1455 form a catalytic loop region. The tract at residues His-1466–Thr-1492 is activation loop. A compositionally biased stretch (low complexity) spans Ala-1609–Leu-1625. The segment at Ala-1609–Lys-1697 is disordered. A run of 5 repeats spans residues Gln-1622–Asp-1626, Leu-1627–Asp-1631, Leu-1632–Asp-1636, Ser-1642–Asp-1646, and Leu-1647–Asp-1651. The tract at residues Gln-1622–Asp-1651 is 5 X 5 AA approximate repeats. Composition is skewed to basic and acidic residues over residues Asp-1626 to Asn-1681 and Asp-1688 to Lys-1697. Residues Lys-1659–Glu-1672 are 7 X 2 AA tandem repeats of K-E.

The protein belongs to the PI3/PI4-kinase family.

The catalysed reaction is a 1,2-diacyl-sn-glycero-3-phospho-(1D-myo-inositol) + ATP = a 1,2-diacyl-sn-glycero-3-phospho-(1D-myo-inositol-3-phosphate) + ADP + H(+). This is Phosphatidylinositol 3-kinase 3 (pikC) from Dictyostelium discoideum (Social amoeba).